The following is a 360-amino-acid chain: Cannabinoid receptor 2 (360 aa).

Topologically, residues 1–33 (MAGCRELELTNGSNGGLEFNPMKEYMILSDAQQ) are extracellular. N-linked (GlcNAc...) asparagine glycosylation is present at Asn-11. A helical membrane pass occupies residues 34-59 (IAVAVLCTLMGLLSALENVAVLYLIL). At 60–71 (SSQRLRRKPSYL) the chain is on the cytoplasmic side. Residues 72–92 (FIGSLAGADFLASVIFACNFV) form a helical membrane-spanning segment. Residues 93 to 104 (IFHVFHGVDSRN) are Extracellular-facing. A helical transmembrane segment spans residues 105 to 129 (IFLLKIGSVTMTFTASVGSLLLTAV). Over 130–149 (DRYLCLCYPPTYKALVTRGR) the chain is Cytoplasmic. The helical transmembrane segment at 150-172 (ALVALGVMWVLSALISYLPLMGW) threads the bilayer. The Extracellular segment spans residues 173–188 (TCCPSPCSELFPLIPN). A helical membrane pass occupies residues 189–214 (DYLLGWLLFIAILFSGIIYTYGYVLW). Over 215 to 246 (KAHQHVASLAEHQDRQVPGIARMRLDVRLAKT) the chain is Cytoplasmic. A helical transmembrane segment spans residues 247–267 (LGLVMAVLLICWFPALALMGH). The Extracellular segment spans residues 268–279 (SLVTTLSDKVKE). A helical membrane pass occupies residues 280–301 (AFAFCSMLCLVNSMINPIIYAL). The Cytoplasmic portion of the chain corresponds to 302–360 (RSGEIRSAAQHCLTGWKKYLQGLGSEGKEEAPKSSVTETEAEVKTTTGPGSRTPGCSNC). The segment at 327-360 (EGKEEAPKSSVTETEAEVKTTTGPGSRTPGCSNC) is disordered. 2 positions are modified to phosphoserine: Ser-335 and Ser-336. Thr-338 bears the Phosphothreonine mark. The segment covering 349–360 (GPGSRTPGCSNC) has biased composition (polar residues). Ser-352 carries the post-translational modification Phosphoserine.

Belongs to the G-protein coupled receptor 1 family. Constitutively phosphorylated on Ser-352; phosphorylation increases cell internalization and desensitizes the receptor. As to expression, expressed in spleen and brain by neurons and glial cells (at protein level). Expressed in lung, testis and thymus but not in heart, liver or kidney. Expressed in cerebellum, cortex and brainstem.

It is found in the cell membrane. Its subcellular location is the cell projection. The protein resides in the dendrite. It localises to the perikaryon. Functionally, heterotrimeric G protein-coupled receptor for endocannabinoid 2-arachidonoylglycerol mediating inhibition of adenylate cyclase. May function in inflammatory response, nociceptive transmission and bone homeostasis. This is Cannabinoid receptor 2 (Cnr2) from Rattus norvegicus (Rat).